We begin with the raw amino-acid sequence, 57 residues long: UPF0434 protein Spea_1772 (57 aa).

This sequence belongs to the UPF0434 family.

The chain is UPF0434 protein Spea_1772 from Shewanella pealeana (strain ATCC 700345 / ANG-SQ1).